A 92-amino-acid chain; its full sequence is MLCAVYKSRKKAETYLFVERREDFSRVPEVLMSTFGRPELVLMTKLDPAKPLGIASTSRVIEALGSQGFYLQVPPPPENLLEQHKAQLKVSR.

Residues 1 to 85 (MLCAVYKSRK…PPENLLEQHK (85 aa)) enclose the YcgL domain.

The protein is YcgL domain-containing protein ASA_2166 of Aeromonas salmonicida (strain A449).